Consider the following 211-residue polypeptide: GATA transcription factor 19 (211 aa).

The GATA-type zinc-finger motif lies at 77–102 (CANCDTTSTPLWRNGPRGPKSLCNAC). The disordered stretch occupies residues 111–131 (RRASTARNSTSGGGSTAAGVP).

It belongs to the type IV zinc-finger family. Class B subfamily. In terms of assembly, forms heterodimers with GATA18.

Its subcellular location is the nucleus. Transcriptional regulator that specifically binds 5'-GATA-3' or 5'-GAT-3' motifs within gene promoters. Regulates both flower and shoot apical meristem (SAM) development, especially for establishing organ boundaries in shoots and flowers, probably by controlling the number and position of WUS-expressing cells. This is GATA transcription factor 19 from Arabidopsis thaliana (Mouse-ear cress).